The primary structure comprises 223 residues: AN1-type zinc finger protein 6 (223 aa).

The A20-type zinc-finger motif lies at 8-42 (SQAPMLCSTGCGFYGNPRTNGMCSVCYKEHLQRQN). Zn(2+) is bound by residues Cys-14, Cys-18, Cys-30, and Cys-33. Residues 41–155 (QNSSNGRISP…PSEEQSKSLE (115 aa)) are disordered. A Phosphoserine modification is found at Ser-49. Composition is skewed to polar residues over residues 77–110 (ALDS…STSV) and 137–148 (SSVSDTTQQPSE). Residues 158–204 (KQKKNRCFMCRKKVGLTGFECRCGNVYCGVHRYSDVHNCSYNYKADA) form an AN1-type zinc finger. 8 residues coordinate Zn(2+): Cys-164, Cys-167, Cys-178, Cys-180, Cys-185, His-188, His-194, and Cys-196. Residue Lys-219 is modified to N6-acetyllysine.

As to quaternary structure, interacts with PKN1. Interacts with TRAF2. Interacts with mono- and polyubiquitin. Interacts with PEX6. Interacts with PEX5 (Cys-linked ubiquitinated).

Its subcellular location is the cytoplasm. Involved in regulation of TNF-alpha induced NF-kappa-B activation and apoptosis. Involved in modulation of 'Lys-48'-linked polyubiquitination status of TRAF2 and decreases association of TRAF2 with RIPK1. Required for PTS1 target sequence-dependent protein import into peroxisomes and PEX5 stability; may cooperate with PEX6. In vitro involved in PEX5 export from the cytosol to peroxisomes. This chain is AN1-type zinc finger protein 6 (Zfand6), found in Mus musculus (Mouse).